We begin with the raw amino-acid sequence, 182 residues long: Bifunctional dihydrofolate reductase-thymidylate synthase (182 aa).

The DHFR domain maps to 1 to 182 (AICACCKVLN…YFTRINNAYT (182 aa)). Residue 25–31 (GLGNAGG) coordinates NADP(+). Residue D40 coordinates substrate. NADP(+) is bound by residues 93 to 95 (KTS) and 114 to 117 (LSRT). The substrate site is built by I154, Y160, and T175. 155–162 (GGASVYKE) provides a ligand contact to NADP(+).

In the N-terminal section; belongs to the dihydrofolate reductase family. This sequence in the C-terminal section; belongs to the thymidylate synthase family. Homodimer.

The catalysed reaction is (6S)-5,6,7,8-tetrahydrofolate + NADP(+) = 7,8-dihydrofolate + NADPH + H(+). The enzyme catalyses dUMP + (6R)-5,10-methylene-5,6,7,8-tetrahydrofolate = 7,8-dihydrofolate + dTMP. It participates in cofactor biosynthesis; tetrahydrofolate biosynthesis; 5,6,7,8-tetrahydrofolate from 7,8-dihydrofolate: step 1/1. Functionally, bifunctional enzyme. Involved in de novo dTMP biosynthesis. Key enzyme in folate metabolism. Catalyzes an essential reaction for de novo glycine and purine synthesis, DNA precursor synthesis, and for the conversion of dUMP to dTMP. The chain is Bifunctional dihydrofolate reductase-thymidylate synthase from Plasmodium vinckei.